The following is a 677-amino-acid chain: UvrABC system protein B (677 aa).

The Helicase ATP-binding domain occupies 24 to 412 (EGVLEGVPAQ…EGIVVEQVIR (389 aa)). 37-44 (GVTGSGKT) contacts ATP. Positions 90 to 113 (YYDYYQPEAYLPSSDTYIEKDLAI) match the Beta-hairpin motif. The region spanning 429 to 591 (QIDDLMEEIQ…ITPQQIKKAR (163 aa)) is the Helicase C-terminal domain. In terms of domain architecture, UVR spans 635 to 670 (EKSMERTRKLMQEAAKKLEFIEAAQYRDELLKMEDL).

The protein belongs to the UvrB family. In terms of assembly, forms a heterotetramer with UvrA during the search for lesions. Interacts with UvrC in an incision complex.

Its subcellular location is the cytoplasm. In terms of biological role, the UvrABC repair system catalyzes the recognition and processing of DNA lesions. A damage recognition complex composed of 2 UvrA and 2 UvrB subunits scans DNA for abnormalities. Upon binding of the UvrA(2)B(2) complex to a putative damaged site, the DNA wraps around one UvrB monomer. DNA wrap is dependent on ATP binding by UvrB and probably causes local melting of the DNA helix, facilitating insertion of UvrB beta-hairpin between the DNA strands. Then UvrB probes one DNA strand for the presence of a lesion. If a lesion is found the UvrA subunits dissociate and the UvrB-DNA preincision complex is formed. This complex is subsequently bound by UvrC and the second UvrB is released. If no lesion is found, the DNA wraps around the other UvrB subunit that will check the other stand for damage. This Bacteroides fragilis (strain YCH46) protein is UvrABC system protein B.